A 124-amino-acid polypeptide reads, in one-letter code: Glycine cleavage system H protein (124 aa).

Residues 22 to 104 form the Lipoyl-binding domain; that stretch reads TATVGITDFA…YGDGWMIEIE (83 aa). K63 carries the post-translational modification N6-lipoyllysine.

Belongs to the GcvH family. As to quaternary structure, the glycine cleavage system is composed of four proteins: P, T, L and H. (R)-lipoate is required as a cofactor.

The glycine cleavage system catalyzes the degradation of glycine. The H protein shuttles the methylamine group of glycine from the P protein to the T protein. The polypeptide is Glycine cleavage system H protein (Salinibacter ruber (strain DSM 13855 / M31)).